Here is a 265-residue protein sequence, read N- to C-terminus: Aliphatic sulfonates import ATP-binding protein SsuB 1 (265 aa).

The ABC transporter domain occupies 31–255; it reads FAFKGVEKRF…RRGSAELARL (225 aa). An ATP-binding site is contributed by 63 to 70; it reads GKSGCGKS.

This sequence belongs to the ABC transporter superfamily. Aliphatic sulfonates importer (TC 3.A.1.17.2) family. In terms of assembly, the complex is composed of two ATP-binding proteins (SsuB), two transmembrane proteins (SsuC) and a solute-binding protein (SsuA).

The protein resides in the cell inner membrane. It carries out the reaction ATP + H2O + aliphatic sulfonate-[sulfonate-binding protein]Side 1 = ADP + phosphate + aliphatic sulfonateSide 2 + [sulfonate-binding protein]Side 1.. Its function is as follows. Part of the ABC transporter complex SsuABC involved in aliphatic sulfonates import. Responsible for energy coupling to the transport system. This is Aliphatic sulfonates import ATP-binding protein SsuB 1 from Mesorhizobium japonicum (strain LMG 29417 / CECT 9101 / MAFF 303099) (Mesorhizobium loti (strain MAFF 303099)).